Consider the following 172-residue polypeptide: Urease accessory protein UreE (172 aa).

Belongs to the UreE family.

The protein resides in the cytoplasm. Its function is as follows. Involved in urease metallocenter assembly. Binds nickel. Probably functions as a nickel donor during metallocenter assembly. The sequence is that of Urease accessory protein UreE from Shewanella halifaxensis (strain HAW-EB4).